We begin with the raw amino-acid sequence, 552 residues long: Membrane protein insertase YidC (552 aa).

A helical transmembrane segment spans residues Asn-6–Phe-26. Polar residues-rich tracts occupy residues Gln-32–Gly-41 and Pro-60–Ala-70. Positions Gln-32 to Ala-70 are disordered. The next 4 membrane-spanning stretches (helical) occupy residues Trp-365–Ser-387, Phe-431–Leu-451, Met-472–Leu-492, and Leu-508–Val-528.

The protein belongs to the OXA1/ALB3/YidC family. Type 1 subfamily. Interacts with the Sec translocase complex via SecD. Specifically interacts with transmembrane segments of nascent integral membrane proteins during membrane integration.

It localises to the cell inner membrane. In terms of biological role, required for the insertion and/or proper folding and/or complex formation of integral membrane proteins into the membrane. Involved in integration of membrane proteins that insert both dependently and independently of the Sec translocase complex, as well as at least some lipoproteins. Aids folding of multispanning membrane proteins. The polypeptide is Membrane protein insertase YidC (Cellvibrio japonicus (strain Ueda107) (Pseudomonas fluorescens subsp. cellulosa)).